A 277-amino-acid polypeptide reads, in one-letter code: Thymidylate synthase (277 aa).

Residue Arg-21 participates in dUMP binding. His-51 contacts (6R)-5,10-methylene-5,6,7,8-tetrahydrofolate. DUMP is bound at residue 126 to 127 (RR). Catalysis depends on Cys-159, which acts as the Nucleophile. Residues 179 to 182 (RSAD), Asn-190, and 220 to 222 (HLY) each bind dUMP. Asp-182 contributes to the (6R)-5,10-methylene-5,6,7,8-tetrahydrofolate binding site. Ser-276 is a binding site for (6R)-5,10-methylene-5,6,7,8-tetrahydrofolate.

The protein belongs to the thymidylate synthase family. Bacterial-type ThyA subfamily. In terms of assembly, homodimer.

The protein localises to the cytoplasm. It catalyses the reaction dUMP + (6R)-5,10-methylene-5,6,7,8-tetrahydrofolate = 7,8-dihydrofolate + dTMP. It participates in pyrimidine metabolism; dTTP biosynthesis. Functionally, catalyzes the reductive methylation of 2'-deoxyuridine-5'-monophosphate (dUMP) to 2'-deoxythymidine-5'-monophosphate (dTMP) while utilizing 5,10-methylenetetrahydrofolate (mTHF) as the methyl donor and reductant in the reaction, yielding dihydrofolate (DHF) as a by-product. This enzymatic reaction provides an intracellular de novo source of dTMP, an essential precursor for DNA biosynthesis. The chain is Thymidylate synthase from Hydrogenovibrio crunogenus (strain DSM 25203 / XCL-2) (Thiomicrospira crunogena).